Reading from the N-terminus, the 108-residue chain is Large ribosomal subunit protein uL23 (108 aa).

It belongs to the universal ribosomal protein uL23 family. As to quaternary structure, part of the 50S ribosomal subunit. Contacts protein L29, and trigger factor when it is bound to the ribosome.

One of the early assembly proteins it binds 23S rRNA. One of the proteins that surrounds the polypeptide exit tunnel on the outside of the ribosome. Forms the main docking site for trigger factor binding to the ribosome. In Polaromonas sp. (strain JS666 / ATCC BAA-500), this protein is Large ribosomal subunit protein uL23.